The primary structure comprises 144 residues: Large ribosomal subunit protein uL13 (144 aa).

A disordered region spans residues 125–144 (YRGPEHPHQAQKPQPLEVKA).

Belongs to the universal ribosomal protein uL13 family. As to quaternary structure, part of the 50S ribosomal subunit.

Functionally, this protein is one of the early assembly proteins of the 50S ribosomal subunit, although it is not seen to bind rRNA by itself. It is important during the early stages of 50S assembly. This chain is Large ribosomal subunit protein uL13, found in Aquifex aeolicus (strain VF5).